A 261-amino-acid polypeptide reads, in one-letter code: Global transcriptional regulator CodY (261 aa).

Positions 1-159 (MANLLDKTRK…ASTVVGLQLL (159 aa)) are GAF domain. The H-T-H motif DNA-binding region spans 207-226 (ASVIADRIGITRSVIVNALR).

Belongs to the CodY family.

The protein resides in the cytoplasm. Functionally, DNA-binding global transcriptional regulator which is involved in the adaptive response to starvation and acts by directly or indirectly controlling the expression of numerous genes in response to nutrient availability. During rapid exponential growth, CodY is highly active and represses genes whose products allow adaptation to nutrient depletion. The polypeptide is Global transcriptional regulator CodY (Streptococcus thermophilus (strain CNRZ 1066)).